A 652-amino-acid polypeptide reads, in one-letter code: Complement component C1q receptor (652 aa).

The first 21 residues, Met-1–Gly-21, serve as a signal peptide directing secretion. Residues Ala-24–Lys-580 lie on the Extracellular side of the membrane. Positions Val-32–Asn-174 constitute a C-type lectin domain. Intrachain disulfides connect Cys-141-Cys-165, Cys-264-Cys-275, Cys-271-Cys-285, Cys-287-Cys-300, Cys-306-Cys-317, Cys-311-Cys-328, Cys-330-Cys-343, Cys-349-Cys-358, Cys-354-Cys-367, Cys-369-Cys-383, Cys-389-Cys-400, Cys-396-Cys-409, Cys-411-Cys-425, Cys-431-Cys-443, Cys-439-Cys-452, and Cys-454-Cys-467. EGF-like domains are found at residues Pro-260–Ala-301 and Ser-302–Val-344. Residue Asn-325 is glycosylated (N-linked (GlcNAc...) asparagine). In terms of domain architecture, EGF-like 3; calcium-binding spans Asp-345–Gln-384. The EGF-like 4; calcium-binding domain occupies Asp-385–Gln-426. Residues Asp-427–Thr-468 form the EGF-like 5; calcium-binding domain. 2 disordered regions span residues Val-472–Glu-546 and Thr-553–Asn-572. The segment covering Ala-512 to Pro-526 has biased composition (polar residues). The chain crosses the membrane as a helical span at residues Leu-581 to Leu-601. Over Gly-602–Cys-652 the chain is Cytoplasmic. The tract at residues Ala-611–Cys-652 is disordered. Residues Lys-612–Pro-621 are compositionally biased toward basic and acidic residues. Ser-627 carries the phosphoserine modification. Tyr-628 and Tyr-644 each carry phosphotyrosine. The segment covering Met-640–Cys-652 has biased composition (polar residues).

As to quaternary structure, homodimer. Interacts with C1QBP; the association may represent a cell surface C1q receptor. Interacts with surfactant protein A/SFTPA1. Interacts with multimerin-2/MMRN2. Interacts with DAG1; this interaction plays an important role in endothelial cell migration. Interacts with CBL. Interacts with IGFBP7. Interacts with VEGFR2. In terms of assembly, (Microbial infection) Interacts with hepatitis virus C/HCV core protein. In terms of processing, N- and O-glycosylated. Phosphorylated on Tyr-628 and Tyr-644 by SRC; these phosphorylations promote endothelial cell adhesion and migration. Highly expressed in endothelial cells, platelets, cells of myeloid origin, such as monocytes and neutrophils. Not expressed in cells of lymphoid origin.

The protein resides in the cell membrane. In terms of biological role, cell surface receptor that plays a role in various physiological processes including inflammation, phagocytosis, and cell adhesion. Plays a role in phagocytosis and enhances the uptake of apoptotic cells and immune complexes by acting as a receptor for defense collagens including surfactant protein A/SFTPA1, C1q, and mannose-binding lectin (MBL2). Plays a role in the regulation of endothelial cell function and adhesion by activating angiogenesis. Mechanistically, exerts its angiogenic function by associating with beta-dystroglycan, leading to SRC-dependent phosphorylation and subsequent recruitment of CBL. In turn, CBL provides a docking site for downstream signaling components, such as CRKL to enhance cell migration. Participates in angiogenesis also by acting as a receptor for the ECM pan-endothelial glycoprotein multimerin-2/MMRN2 and IGFBP7 ligands. Both ligands play a non-redundant role in CD93-mediated endothelial cell function. Acts as a key regulator of endothelial barrier function through modulating VEGFR2 function. This is Complement component C1q receptor (CD93) from Homo sapiens (Human).